The primary structure comprises 274 residues: MQQLQNIIETAFERRAEITPTNADTVTREAVNQVIALLDSGALRVAEKIDGQWVTHQWLKKAVLLSFRINDNQVIEGAESRYFDKVPMKFADYDEARFQKEGFRVVPPAAVRQGAFIARNTVLMPSYVNIGAYVDEGTMVDTWATVGSCAQIGKNVHLSGGVGIGGVLEPLQANPTIIEDNCFIGARSEVVEGVIVEEGSVISMGVYIGQSTRIYDRETGEIHYGHVPAGSVVVSGNLPSKDGKYSLYCAVIVKKVDAKTRGKVGINELLRTID.

Arginine 104 and aspartate 141 together coordinate substrate.

The protein belongs to the transferase hexapeptide repeat family. In terms of assembly, homotrimer.

It is found in the cytoplasm. It carries out the reaction (S)-2,3,4,5-tetrahydrodipicolinate + succinyl-CoA + H2O = (S)-2-succinylamino-6-oxoheptanedioate + CoA. It participates in amino-acid biosynthesis; L-lysine biosynthesis via DAP pathway; LL-2,6-diaminopimelate from (S)-tetrahydrodipicolinate (succinylase route): step 1/3. The polypeptide is 2,3,4,5-tetrahydropyridine-2,6-dicarboxylate N-succinyltransferase (Shigella boydii serotype 4 (strain Sb227)).